A 98-amino-acid polypeptide reads, in one-letter code: Large ribosomal subunit protein bL27 (98 aa).

A propeptide spanning residues 1 to 9 (MLKMNLQLF) is cleaved from the precursor.

The protein belongs to the bacterial ribosomal protein bL27 family. In terms of processing, the N-terminus is cleaved by ribosomal processing cysteine protease Prp.

The sequence is that of Large ribosomal subunit protein bL27 from Desulfitobacterium hafniense (strain DSM 10664 / DCB-2).